The following is a 515-amino-acid chain: Bifunctional purine biosynthesis protein PurH (515 aa).

Residues 1–145 (MTKRALISVS…KNHASVTVVV (145 aa)) enclose the MGS-like domain.

The protein belongs to the PurH family.

The catalysed reaction is (6R)-10-formyltetrahydrofolate + 5-amino-1-(5-phospho-beta-D-ribosyl)imidazole-4-carboxamide = 5-formamido-1-(5-phospho-D-ribosyl)imidazole-4-carboxamide + (6S)-5,6,7,8-tetrahydrofolate. It catalyses the reaction IMP + H2O = 5-formamido-1-(5-phospho-D-ribosyl)imidazole-4-carboxamide. It participates in purine metabolism; IMP biosynthesis via de novo pathway; 5-formamido-1-(5-phospho-D-ribosyl)imidazole-4-carboxamide from 5-amino-1-(5-phospho-D-ribosyl)imidazole-4-carboxamide (10-formyl THF route): step 1/1. Its pathway is purine metabolism; IMP biosynthesis via de novo pathway; IMP from 5-formamido-1-(5-phospho-D-ribosyl)imidazole-4-carboxamide: step 1/1. This chain is Bifunctional purine biosynthesis protein PurH, found in Streptococcus agalactiae serotype Ia (strain ATCC 27591 / A909 / CDC SS700).